The following is a 231-amino-acid chain: Endonuclease NucS (231 aa).

The protein belongs to the NucS endonuclease family.

The protein localises to the cytoplasm. Functionally, cleaves both 3' and 5' ssDNA extremities of branched DNA structures. In Arthrobacter sp. (strain FB24), this protein is Endonuclease NucS.